The following is a 604-amino-acid chain: Threonine--tRNA ligase (604 aa).

The interval 197–499 (DHRKLGRELG…LIEEYAGDFP (303 aa)) is catalytic. The Zn(2+) site is built by Cys296, His347, and His476.

It belongs to the class-II aminoacyl-tRNA synthetase family. Homodimer. It depends on Zn(2+) as a cofactor.

The protein localises to the cytoplasm. The catalysed reaction is tRNA(Thr) + L-threonine + ATP = L-threonyl-tRNA(Thr) + AMP + diphosphate + H(+). In terms of biological role, catalyzes the attachment of threonine to tRNA(Thr) in a two-step reaction: L-threonine is first activated by ATP to form Thr-AMP and then transferred to the acceptor end of tRNA(Thr). Also edits incorrectly charged L-seryl-tRNA(Thr). In Synechococcus elongatus (strain ATCC 33912 / PCC 7942 / FACHB-805) (Anacystis nidulans R2), this protein is Threonine--tRNA ligase.